The following is a 145-amino-acid chain: Secreted LysM effector Vd2LysM (145 aa).

The signal sequence occupies residues methionine 1 to alanine 18. LysM domains are found at residues glycine 31–valine 75 and glycine 96–valine 140.

Belongs to the secreted LysM effector family. As to quaternary structure, forms homodimers in a chitin-independent manner through interactions at the N-termini of EPL2 monomers. Homodimers are further polymerized in a chitin-dependent manner.

Its function is as follows. Secreted effector that enables the plant pathogenic fungus to manipulate host defenses for successful infection. Binds chitin, suppresses chitin-induced immune responses and protects hyphae against degradation by plant hydrolytic enzymes. Chitin-induced polymerization of homodimers forms a contiguous ELP2 highly oligomeric super-complexe that may precipitate at infection sites to eliminate chitin oligomers, and thus suppress the activation of chitin-induced plant immunity. The protein is Secreted LysM effector Vd2LysM of Verticillium dahliae (strain VdLs.17 / ATCC MYA-4575 / FGSC 10137) (Verticillium wilt).